We begin with the raw amino-acid sequence, 122 residues long: Basic phospholipase A2 PL-X (122 aa).

Intrachain disulfides connect cysteine 26/cysteine 115, cysteine 28/cysteine 44, cysteine 43/cysteine 95, cysteine 49/cysteine 122, cysteine 50/cysteine 88, cysteine 57/cysteine 81, and cysteine 75/cysteine 86. The Ca(2+) site is built by tyrosine 27, glycine 29, and glycine 31. Histidine 47 is a catalytic residue. Aspartate 48 provides a ligand contact to Ca(2+). Residue aspartate 89 is part of the active site.

The protein belongs to the phospholipase A2 family. Group II subfamily. D49 sub-subfamily. Ca(2+) is required as a cofactor. Expressed by the venom gland.

It is found in the secreted. The catalysed reaction is a 1,2-diacyl-sn-glycero-3-phosphocholine + H2O = a 1-acyl-sn-glycero-3-phosphocholine + a fatty acid + H(+). Its function is as follows. PLA2 catalyzes the calcium-dependent hydrolysis of the 2-acyl groups in 3-sn-phosphoglycerides. In Protobothrops flavoviridis (Habu), this protein is Basic phospholipase A2 PL-X.